The following is a 395-amino-acid chain: GPI-anchor transamidase (395 aa).

An N-terminal signal peptide occupies residues 1-27 (MAAPCFLTLRVATLAALALLSLGSSAA). The Lumenal segment spans residues 28-368 (GHIEDQAEQF…PKPRDWHPPG (341 aa)). D79, I82, E118, and D120 together coordinate Ca(2+). H164 functions as the Proton donor in the catalytic mechanism. C206 (nucleophile; acyl-thioester intermediate) is an active-site residue. A protein is bound by residues C206, S232, and S234. The tract at residues 231–236 (DSLSHQ) is autoinhibitory loop. Residues C275 and C280 are joined by a disulfide bond. Residues 369–385 (GFILGLWALIIMVFFKT) traverse the membrane as a helical segment. The Cytoplasmic portion of the chain corresponds to 386–395 (YGIKHMKFIF).

Belongs to the peptidase C13 family. In terms of assembly, heteropentamer. Part of the GPI-anchor transamidase complex, consisting of PIGK, PIGT, PIGS, PIGU and GAA1. Interacts with GPAA1. Interacts with PIGT; this interaction, via a disulfide link, stabilizes the expression of GAA1 and PIGK and links them to PIGS. The disulfide bond between PIGK/GPI8 and PIGT is important for normal enzyme activity.

Its subcellular location is the endoplasmic reticulum membrane. It functions in the pathway glycolipid biosynthesis; glycosylphosphatidylinositol-anchor biosynthesis. Its activity is regulated as follows. In the absence of proproteins substrates, exists in an inactive state with a disrupted catalytic site by an autoinhibitory loop. The binding of proprotein substrates, particularly the CSP region, to GPI-T triggers concerted conformational changes that alleviate the inhibition by the autoinhibitory loop. Meanwhile, proprotein residues near the omega- site induce the formation of a catalytic cleft for catalysis, following which the products are released and GPI-T reverts to the inactive state. Functionally, catalytic subunit of the glycosylphosphatidylinositol-anchor (GPI-anchor) transamidase (GPI-T) complex that catalyzes the formation of the linkage between a proprotein and a GPI-anchor and participates in GPI anchored protein biosynthesis. Recognizes diverse proproteins at a C-terminal signal peptide (CSP) region that lacks consensus sequence and replaces it with a GPI-anchor via a transamidation reaction. Transamidation catalysis reaction follows a two-phase mechanism. In the acyl-enzyme phase, the carbonyl group of the proproteins's omega-site undergoes a nucleophilic attack forming an enzyme-substrate thioester bond. Followed by a general acid catalysis that allows CSP releasing, regenerating the carbonyl, and forming the acyl-enzyme intermediate. In the GPI-anchor attachment phase, the amino group of the GPI-anchor's ethanolamine phosphate, the one on third mannose (EtNP3), mediates a nucleophilic attack on the carbonyl of the acyl-enzyme intermediate, replacing the CSP, allowing GPI-anchor attachment to the omega-residue, therefore forming the product and freeing the enzyme. The protein is GPI-anchor transamidase of Mus musculus (Mouse).